Here is a 263-residue protein sequence, read N- to C-terminus: Protein maestro (263 aa).

The tract at residues Met-1–Lys-21 is disordered. Residues Ser-128 to Ala-163 form an HEAT repeat.

It localises to the nucleus. The protein resides in the nucleolus. The polypeptide is Protein maestro (MRO) (Bos taurus (Bovine)).